We begin with the raw amino-acid sequence, 442 residues long: Chromosomal replication initiator protein DnaA (442 aa).

The domain I, interacts with DnaA modulators stretch occupies residues 1-75; the sequence is MDAWPRCLER…GNGEVALAVG (75 aa). Positions 75–104 are domain II; sequence GSRPRAPEPAPAAAAVPSAPQAAPMVPFAG. The segment at 105–322 is domain III, AAA+ region; the sequence is NLDSHYTFAN…GALNTLVARA (218 aa). ATP is bound by residues Gly150, Gly152, Lys153, and Thr154. The tract at residues 323-442 is domain IV, binds dsDNA; the sequence is NFTGRSITVE…WEKLIRKLSE (120 aa).

It belongs to the DnaA family. Oligomerizes as a right-handed, spiral filament on DNA at oriC.

The protein resides in the cytoplasm. Plays an essential role in the initiation and regulation of chromosomal replication. ATP-DnaA binds to the origin of replication (oriC) to initiate formation of the DNA replication initiation complex once per cell cycle. Binds the DnaA box (a 9 base pair repeat at the origin) and separates the double-stranded (ds)DNA. Forms a right-handed helical filament on oriC DNA; dsDNA binds to the exterior of the filament while single-stranded (ss)DNA is stabiized in the filament's interior. The ATP-DnaA-oriC complex binds and stabilizes one strand of the AT-rich DNA unwinding element (DUE), permitting loading of DNA polymerase. After initiation quickly degrades to an ADP-DnaA complex that is not apt for DNA replication. Binds acidic phospholipids. The polypeptide is Chromosomal replication initiator protein DnaA (Xanthomonas euvesicatoria pv. vesicatoria (strain 85-10) (Xanthomonas campestris pv. vesicatoria)).